The primary structure comprises 260 residues: Dehydrogenase/reductase SDR family member 11 (260 aa).

The signal sequence occupies residues 1 to 30; sequence MTRAGMERWRDRLALVTGASGGIGAAVARA. NADP(+)-binding positions include 18 to 23, 43 to 44, Glu49, 70 to 71, and Asn97; these read GASGGI, RT, and DL. The substrate site is built by Ser151 and Tyr166. NADP(+) is bound by residues Tyr166, Lys170, 201–204, and Lys208; that span reads VETQ. Tyr166 acts as the Proton acceptor in catalysis.

The protein belongs to the short-chain dehydrogenases/reductases (SDR) family. In terms of assembly, homotetramer.

The protein resides in the secreted. It catalyses the reaction a 3beta-hydroxysteroid + NADP(+) = a 3-oxosteroid + NADPH + H(+). It carries out the reaction 17beta-estradiol + NAD(+) = estrone + NADH + H(+). The catalysed reaction is 17beta-estradiol + NADP(+) = estrone + NADPH + H(+). The protein operates within steroid biosynthesis; estrogen biosynthesis. With respect to regulation, inhibited by flavonoids including apigenin, luteolin, genistein, kaempferol and quercetin and also by carbenoxolone, zearalenone, glycyrrhetinic, curcumin and flufenamic acid. Functionally, catalyzes the conversion of the 17-keto group of estrone, 4- and 5-androstenes and 5-alpha-androstanes into their 17-beta-hydroxyl metabolites and the conversion of the 3-keto group of 3-, 3,17- and 3,20- diketosteroids into their 3-hydroxyl metabolites. Exhibits reductive 3-beta-hydroxysteroid dehydrogenase activity toward 5-beta-androstanes, 5-beta-pregnanes, 4-pregnenes and bile acids. May also reduce endogenous and exogenous alpha-dicarbonyl compounds and xenobiotic alicyclic ketones. The sequence is that of Dehydrogenase/reductase SDR family member 11 (Dhrs11) from Mus musculus (Mouse).